A 107-amino-acid polypeptide reads, in one-letter code: uncharacterized protein (107 aa).

The disordered stretch occupies residues 86–107; sequence QVSNHEEDADVLETQDDNAEQV. Residues 92–107 show a composition bias toward acidic residues; the sequence is EDADVLETQDDNAEQV.

This is an uncharacterized protein from Rickettsia prowazekii (strain Madrid E).